A 238-amino-acid polypeptide reads, in one-letter code: Ribonuclease HII (238 aa).

In terms of domain architecture, RNase H type-2 spans 12-197; the sequence is GIVAGVDEAG…VLELLTDDLL (186 aa). Positions 18, 19, and 107 each coordinate a divalent metal cation.

Belongs to the RNase HII family. Mn(2+) is required as a cofactor. It depends on Mg(2+) as a cofactor.

It is found in the cytoplasm. The catalysed reaction is Endonucleolytic cleavage to 5'-phosphomonoester.. Functionally, endonuclease that specifically degrades the RNA of RNA-DNA hybrids. The polypeptide is Ribonuclease HII (Thermotoga petrophila (strain ATCC BAA-488 / DSM 13995 / JCM 10881 / RKU-1)).